Reading from the N-terminus, the 94-residue chain is Small ribosomal subunit protein bS6 (94 aa).

Belongs to the bacterial ribosomal protein bS6 family.

In terms of biological role, binds together with bS18 to 16S ribosomal RNA. The sequence is that of Small ribosomal subunit protein bS6 from Desulforudis audaxviator (strain MP104C).